We begin with the raw amino-acid sequence, 245 residues long: uncharacterized protein (245 aa).

A coiled-coil region spans residues Gln-33–Thr-176.

This is an uncharacterized protein from Mycobacterium tuberculosis (strain CDC 1551 / Oshkosh).